A 298-amino-acid polypeptide reads, in one-letter code: Ethanolamine ammonia-lyase small subunit (298 aa).

The targets protein to the BMC stretch occupies residues 1 to 19 (MDQKQIEEIVRSVMASMGQ). Adenosylcob(III)alamin-binding residues include valine 210, glutamate 231, and cysteine 261.

This sequence belongs to the EutC family. As to quaternary structure, the basic unit is a heterodimer which dimerizes to form tetramers. The heterotetramers trimerize; 6 large subunits form a core ring with 6 small subunits projecting outwards. Interacts with EutS, which targets it to the interior of the BMC. It depends on adenosylcob(III)alamin as a cofactor.

The protein resides in the bacterial microcompartment. The enzyme catalyses ethanolamine = acetaldehyde + NH4(+). It functions in the pathway amine and polyamine degradation; ethanolamine degradation. In terms of biological role, catalyzes the deamination of various vicinal amino-alcohols to oxo compounds. It is spontaneously inactivated by its substrate and reactivated by EutA. May play a role in bacterial microcompartment (BMC) assembly or maintenance. Directly targeted to the BMC. Functionally, expression of the eut operon allows this bacteria to use ethanolamine (EA) as a carbon, nitrogen and energy source. It relies on cobalamin (vitamin B12) both as a cofactor for the ethanolamine ammonia-lyase activity and to induce the operon. EA enhances bacterial survival in macrophages in a concentration-dependent manner, suggesting it is an important nutrient during infection. This is Ethanolamine ammonia-lyase small subunit from Salmonella typhimurium (strain LT2 / SGSC1412 / ATCC 700720).